Consider the following 177-residue polypeptide: Protein BROTHER of FT and TFL 1 (177 aa).

The protein belongs to the phosphatidylethanolamine-binding protein family.

The protein resides in the cytoplasm. In terms of biological role, may form complexes with phosphorylated ligands by interfering with kinases and their effectors. The chain is Protein BROTHER of FT and TFL 1 (BFT) from Arabidopsis thaliana (Mouse-ear cress).